Consider the following 428-residue polypeptide: Sialidase-3 (428 aa).

An FRIP motif motif is present at residues 24–27 (YRIP). Residues arginine 25 and arginine 45 each coordinate substrate. Aspartate 50 (proton acceptor) is an active-site residue. A BNR 1 repeat occupies 129-140 (ICSQDAGYSWSD). Residues tyrosine 179 and tyrosine 181 each contribute to the substrate site. One copy of the BNR 2 repeat lies at 203-214 (IYSDDLGATWHH). 2 residues coordinate substrate: glutamate 225 and arginine 245. A BNR 3 repeat occupies 254-265 (ALSIDHGECFQK). The residue at position 314 (serine 314) is a Phosphoserine. Position 341 (arginine 341) interacts with substrate. The active-site Nucleophile is the tyrosine 371. Glutamate 388 is a catalytic residue.

Belongs to the glycosyl hydrolase 33 family. In terms of assembly, interacts with CAV1; this interaction enhances NEU3 sialidase activity within caveola. Interacts with EGFR; this interaction mediates desialylation of EGFR and enhances downstream signaling. In terms of processing, palmitoylated; may regulate intracellular trafficking and anchorage to plasma membrane and endomembranes. As to expression, expressed in brain.

The protein resides in the cell membrane. The protein localises to the membrane. It is found in the caveola. It localises to the early endosome membrane. Its subcellular location is the recycling endosome membrane. The protein resides in the lysosome membrane. It catalyses the reaction Hydrolysis of alpha-(2-&gt;3)-, alpha-(2-&gt;6)-, alpha-(2-&gt;8)- glycosidic linkages of terminal sialic acid residues in oligosaccharides, glycoproteins, glycolipids, colominic acid and synthetic substrates.. The enzyme catalyses a ganglioside GD1a + H2O = a ganglioside GM1 + N-acetylneuraminate. The catalysed reaction is a ganglioside GD1a (d18:1(4E)) + H2O = a ganglioside GM1 (d18:1(4E)) + N-acetylneuraminate. It carries out the reaction a ganglioside GD1b + H2O = a ganglioside GM1 + N-acetylneuraminate. It catalyses the reaction a ganglioside GD1b (d18:1(4E)) + H2O = a ganglioside GM1 (d18:1(4E)) + N-acetylneuraminate. The enzyme catalyses a ganglioside GD3 + H2O = a ganglioside GM3 + N-acetylneuraminate. The catalysed reaction is a ganglioside GD3 (d18:1(4E)) + H2O = a ganglioside GM3 (d18:1(4E)) + N-acetylneuraminate. It carries out the reaction a ganglioside GM3 + H2O = a beta-D-galactosyl-(1-&gt;4)-beta-D-glucosyl-(1&lt;-&gt;1)-ceramide + N-acetylneuraminate. It catalyses the reaction a ganglioside GM1 + H2O = a ganglioside GA1 + N-acetylneuraminate. The enzyme catalyses a ganglioside GM1 (d18:1(4E)) + H2O = a ganglioside GA1 (d18:1(4E)) + N-acetylneuraminate. The catalysed reaction is a ganglioside GM2 (d18:1(4E)) + H2O = a ganglioside GA2 (d18:1(4E)) + N-acetylneuraminate. It carries out the reaction a ganglioside GM3 (d18:1(4E)) + H2O = a beta-D-Gal-(1-&gt;4)-beta-D-Glc-(1&lt;-&gt;1)-Cer(d18:1(4E)) + N-acetylneuraminate. It catalyses the reaction a ganglioside GT1b + H2O = a ganglioside GD1b + N-acetylneuraminate. Its function is as follows. Exo-alpha-sialidase that catalyzes the hydrolytic cleavage of the terminal sialic acid (N-acetylneuraminic acid, Neu5Ac) of a glycan moiety in the catabolism of glycolipids, glycoproteins and oligosacharides. Displays high catalytic efficiency for gangliosides including alpha-(2-&gt;3)-sialylated GD1a and GM3 and alpha-(2-&gt;8)-sialylated GD3. Plays a role in the regulation of transmembrane signaling through the modulation of ganglioside content of the lipid bilayer and by direct interaction with signaling receptors, such as EGFR. Desialylates EGFR and activates downstream signaling in proliferating cells. Contributes to clathrin-mediated endocytosis by regulating sorting of endocytosed receptors to early and recycling endosomes. The sequence is that of Sialidase-3 (NEU3) from Bos taurus (Bovine).